A 141-amino-acid polypeptide reads, in one-letter code: Ribosomal RNA large subunit methyltransferase H (141 aa).

Gly88 contacts S-adenosyl-L-methionine.

This sequence belongs to the RNA methyltransferase RlmH family. Homodimer.

The protein resides in the cytoplasm. The catalysed reaction is pseudouridine(1915) in 23S rRNA + S-adenosyl-L-methionine = N(3)-methylpseudouridine(1915) in 23S rRNA + S-adenosyl-L-homocysteine + H(+). In terms of biological role, specifically methylates the pseudouridine at position 1915 (m3Psi1915) in 23S rRNA. The polypeptide is Ribosomal RNA large subunit methyltransferase H (Novosphingobium aromaticivorans (strain ATCC 700278 / DSM 12444 / CCUG 56034 / CIP 105152 / NBRC 16084 / F199)).